A 429-amino-acid chain; its full sequence is ETS domain-containing protein Elk-1 (429 aa).

Residues 5–86 constitute a DNA-binding region (ETS); it reads VTLWQFLLQL…SGQKFVYKFV (82 aa). 3 disordered regions span residues 119 to 146, 165 to 204, and 227 to 253; these read HAGP…GLAR, SLQP…SPNP, and APNQ…KVEG. Residues 169–178 show a composition bias toward pro residues; it reads QPQPPIPPRP. Glycyl lysine isopeptide (Lys-Gly) (interchain with G-Cter in SUMO) cross-links involve residues Lys231, Lys250, and Lys255. Over residues 302 to 312 the composition is skewed to polar residues; it reads STSTTEITQPQ. A disordered region spans residues 302–354; that stretch reads STSTTEITQPQKGRKPRDLELPLSPSLLGGQGPERTPGSGTSSGLQAPGPALT. At Ser325 the chain carries Phosphoserine; by MAPK1. 4 positions are modified to phosphothreonine; by MAPK1: Thr337, Thr354, Thr364, and Thr369. The interval 350–400 is sufficient for interaction with MAD2L2; sequence GPALTPSLLPTHTLTPVLLTPSSLPPSIHFWSTLSPIAPRSPAKLSFQFPS. O-linked (GlcNAc) threonine glycosylation is present at Thr382. Ser384 carries the phosphoserine; by MAPK1 and MAPK8 modification. At Ser390 the chain carries Phosphoserine; by MAPK1. Thr418 is modified (phosphothreonine; by MAPK1). At Ser423 the chain carries Phosphoserine; by MAPK1.

The protein belongs to the ETS family. In terms of assembly, interacts in its sumoylated form with PIAS2/PIASX which enhances its transcriptional activator activity. Interacts with MAD2L2; the interaction is direct and promotes phosphorylation by the kinases MAPK8 and/or MAPK9. Interacts with POU1F1. Sumoylation represses transcriptional activator activity as it results in recruitment of HDAC2 to target gene promoters which leads to decreased histone acetylation and reduced transactivator activity. It also regulates nuclear retention. Post-translationally, on mitogenic stimulation, phosphorylated on C-terminal serine and threonine residues by MAPK1 but also MAPK8 and/or MAPK9. Phosphorylation leads to loss of sumoylation and restores transcriptional activator activity. Phosphorylated and activated by CaMK4, MAPK11, MAPK12 and MAPK14. Upon bFGF stimulus, phosphorylated by PAK1. Phosphorylated by PRP4K at Thr-418; phosphorylation activation ELK1 transcriptional activity. Predominantly expressed in the brain, and to a lesser extent in the heart, liver and muscle.

It localises to the nucleus. Transcription factor that binds to purine-rich DNA sequences. Forms a ternary complex with SRF and the ETS and SRF motifs of the serum response element (SRE) on the promoter region of immediate early genes such as FOS and IER2. Induces target gene transcription upon JNK and MAPK-signaling pathways stimulation. The sequence is that of ETS domain-containing protein Elk-1 from Mus musculus (Mouse).